We begin with the raw amino-acid sequence, 894 residues long: Phosphoenolpyruvate carboxylase (894 aa).

Residues His-143 and Lys-556 contribute to the active site.

The protein belongs to the PEPCase type 1 family. Mg(2+) is required as a cofactor.

It carries out the reaction oxaloacetate + phosphate = phosphoenolpyruvate + hydrogencarbonate. Functionally, forms oxaloacetate, a four-carbon dicarboxylic acid source for the tricarboxylic acid cycle. This chain is Phosphoenolpyruvate carboxylase, found in Acinetobacter baylyi (strain ATCC 33305 / BD413 / ADP1).